A 213-amino-acid chain; its full sequence is MLCCIRRTKPVEKNEEADQEIKQDGTKPEENAHKAATKIQASFRGHITRKKMKDEDKDGENDTAPDESAETEEKEERVSPSEEKPVEVSTETAEESKPAEQPNSPAAEAPPTAATDSAPSDTPTKEEAQEQLQDAEEPKETENTAAADDITTQKEEEKEEEEEEEEEEEEAKRADVPDDTPAATESQETDQTDKKEALDDSKPAEEAGKDQNV.

The tract at residues methionine 1–valine 213 is disordered. 2 S-palmitoyl cysteine lipidation sites follow: cysteine 3 and cysteine 4. A compositionally biased stretch (basic and acidic residues) spans lysine 9–histidine 33. The region spanning alanine 32 to asparagine 61 is the IQ domain. A compositionally biased stretch (acidic residues) spans lysine 57–glutamate 73. Basic and acidic residues predominate over residues lysine 74–valine 86. The segment covering proline 102–threonine 122 has biased composition (low complexity). The segment covering glutamate 157–glutamate 169 has biased composition (acidic residues). The span at glutamine 191 to valine 213 shows a compositional bias: basic and acidic residues.

The protein belongs to the neuromodulin family. As to quaternary structure, binds calmodulin with a greater affinity in the absence of Ca(2+) than in its presence. In terms of processing, palmitoylated. Palmitoylation is essential for plasma membrane association.

The protein localises to the cell membrane. Its subcellular location is the cell projection. It localises to the growth cone membrane. The protein resides in the synapse. It is found in the filopodium membrane. Its function is as follows. This protein is associated with nerve growth. It is a major component of the motile 'growth cones' that form the tips of elongating axons. Plays a role in axonal and dendritic filopodia induction. This Carassius auratus (Goldfish) protein is Neuromodulin (gap43).